We begin with the raw amino-acid sequence, 173 residues long: Photosystem I assembly protein Ycf3 (173 aa).

TPR repeat units lie at residues 35–68 (AYVYYRDGLSAQNDGDYAEALENYDEALKLETDP), 72–105 (GETLKNMAIIYMSNGEEERAIETYQKALDENPKQ), and 120–153 (GRIAEESGQQDDADRWFDQAADVWTQAVRLNPGG).

This sequence belongs to the Ycf3 family.

The protein localises to the cellular thylakoid membrane. Functionally, essential for the assembly of the photosystem I (PSI) complex. May act as a chaperone-like factor to guide the assembly of the PSI subunits. The protein is Photosystem I assembly protein Ycf3 of Synechococcus sp. (strain CC9902).